Reading from the N-terminus, the 465-residue chain is Putative mannose-1-phosphate guanylyltransferase (465 aa).

This sequence belongs to the mannose-6-phosphate isomerase type 2 family.

It carries out the reaction alpha-D-mannose 1-phosphate + GTP + H(+) = GDP-alpha-D-mannose + diphosphate. It functions in the pathway nucleotide-sugar biosynthesis; GDP-alpha-D-mannose biosynthesis; GDP-alpha-D-mannose from alpha-D-mannose 1-phosphate (GTP route): step 1/1. The protein operates within bacterial outer membrane biogenesis; LPS O-antigen biosynthesis. The sequence is that of Putative mannose-1-phosphate guanylyltransferase (rfbA) from Vibrio cholerae serotype O1 (strain ATCC 39315 / El Tor Inaba N16961).